The chain runs to 291 residues: Neugrin (291 aa).

A signal peptide spans 1 to 15 (MAVTLSLLLSGRVCA). Residues 27–49 (VADPGPIGREPDPDSDWEPEERE) form a disordered region. Positions 39–49 (PDSDWEPEERE) are enriched in acidic residues. At Ser-41 the chain carries Phosphoserine. Asn-158 is a glycosylation site (N-linked (GlcNAc...) asparagine). The disordered stretch occupies residues 224-270 (VAAPLGHPRELQKYSSDSESPRRTGNGALPSDQKLEELKAEEPGNFS). Residues 256–265 (QKLEELKAEE) are compositionally biased toward basic and acidic residues.

The protein belongs to the neugrin family. Forms a regulatory protein-RNA complex, consisting of RCC1L, NGRN, RPUSD3, RPUSD4, TRUB2, FASTKD2 and 16S mt-rRNA. Interacts with 16S mt-rRNA; this interaction is direct.

It localises to the nucleus. The protein localises to the secreted. The protein resides in the mitochondrion membrane. Plays an essential role in mitochondrial ribosome biogenesis. As a component of a functional protein-RNA module, consisting of RCC1L, NGRN, RPUSD3, RPUSD4, TRUB2, FASTKD2 and 16S mitochondrial ribosomal RNA (16S mt-rRNA), controls 16S mt-rRNA abundance and is required for intra-mitochondrial translation of core subunits of the oxidative phosphorylation system. The chain is Neugrin (NGRN) from Pongo abelii (Sumatran orangutan).